The chain runs to 197 residues: NADH-quinone oxidoreductase subunit C (197 aa).

This sequence belongs to the complex I 30 kDa subunit family. NDH-1 is composed of 14 different subunits. Subunits NuoB, C, D, E, F, and G constitute the peripheral sector of the complex.

Its subcellular location is the cell inner membrane. The catalysed reaction is a quinone + NADH + 5 H(+)(in) = a quinol + NAD(+) + 4 H(+)(out). Its function is as follows. NDH-1 shuttles electrons from NADH, via FMN and iron-sulfur (Fe-S) centers, to quinones in the respiratory chain. The immediate electron acceptor for the enzyme in this species is believed to be ubiquinone. Couples the redox reaction to proton translocation (for every two electrons transferred, four hydrogen ions are translocated across the cytoplasmic membrane), and thus conserves the redox energy in a proton gradient. The protein is NADH-quinone oxidoreductase subunit C of Methylobacillus flagellatus (strain ATCC 51484 / DSM 6875 / VKM B-1610 / KT).